Consider the following 261-residue polypeptide: Short-chain-enoyl-CoA hydratase (261 aa).

Catalysis depends on E114, which acts as the Nucleophile. E134 acts as the Proton acceptor in catalysis.

This sequence belongs to the enoyl-CoA hydratase/isomerase family. Homotetramer.

It catalyses the reaction a short-chain (3S)-3-hydroxyacyl-CoA = a short-chain (2E)-enoyl-CoA + H2O. It participates in lipid metabolism; butanoate metabolism. Catalyzes the reversible hydration of crotonyl-CoA. Can also use hexenoyl-CoA but not higher analogs. This is Short-chain-enoyl-CoA hydratase (crt) from Clostridium acetobutylicum (strain ATCC 824 / DSM 792 / JCM 1419 / IAM 19013 / LMG 5710 / NBRC 13948 / NRRL B-527 / VKM B-1787 / 2291 / W).